The primary structure comprises 447 residues: N-succinylarginine dihydrolase (447 aa).

Substrate-binding positions include alanine 19–serine 28, asparagine 110, and histidine 137–arginine 138. Residue glutamate 174 is part of the active site. Arginine 212 contributes to the substrate binding site. The active site involves histidine 248. Aspartate 250 and asparagine 359 together coordinate substrate. The Nucleophile role is filled by cysteine 365.

Belongs to the succinylarginine dihydrolase family. As to quaternary structure, homodimer.

The catalysed reaction is N(2)-succinyl-L-arginine + 2 H2O + 2 H(+) = N(2)-succinyl-L-ornithine + 2 NH4(+) + CO2. Its pathway is amino-acid degradation; L-arginine degradation via AST pathway; L-glutamate and succinate from L-arginine: step 2/5. Catalyzes the hydrolysis of N(2)-succinylarginine into N(2)-succinylornithine, ammonia and CO(2). In Salmonella arizonae (strain ATCC BAA-731 / CDC346-86 / RSK2980), this protein is N-succinylarginine dihydrolase.